A 397-amino-acid chain; its full sequence is L-aspartate--L-methionine ligase (397 aa).

One can recognise an ATP-grasp domain in the interval 131-347; the sequence is VALNNKARIP…FFNTILKYVK (217 aa). Residues K136, V171, K173, G183, V186, I188, E215, Q216, I218, N223, and T246 each coordinate ADP. Residue D288 participates in Mg(2+) binding. L290 and I300 together coordinate ADP. D301 provides a ligand contact to Mg(2+). The Critical for catalysis role is filled by R305.

Primarily a monomer in solution. Minor homodimer formation. It depends on Mg(2+) as a cofactor.

The enzyme catalyses L-aspartate + L-methionine + ATP = L-aspartyl-L-methionine + ADP + phosphate + H(+). The protein operates within amino-acid metabolism. L-amino acid ligase, which preferentially catalyzes the formation of L-aspartyl-L-methionine dipeptide from L-aspartate and L-methionine in the presence of ATP. Less active with L-asparagine and L-methionine as substrates. Less active with L-aspartate and either L-phenylalanine, L-valine, L-leucine or L-isoleucine as substrates. Decreased activity when L-methionine is substituted with seleno-DL-methionine, L-homocysteine, L-methionine sulfoxide, L-methionine sulfoximine and o-acetyl-L-serine. Decreased activity with acetylation of L-methionine amino group. Decreased activity by modification of L-methionine carboxylate to L-methionine methyl ester. No activity when L-methionine is substituted with L-homoserine. No activity with formylation of L-methionine amino group. No activity by modification of L-methionine carboxylate to L-methionine-glycine carboxylate. No activity when L-aspartate substrate is replaced by analogs such as L-homoserine, DL-aspartate beta-methyl ester, L-glutamate or o-acetyl-L-serine. No activity when L-aspartate amino and alpha-carboxylate groups are modified to L-malate, glycine-L-aspartate, L-aspartate-glycine or N-carbamoyl-DL-aspartate. No activity with L-methionine or L-aspartate as sole substrates. No activity in presence of other nucleoside triphosphates including GTP, CTP, UTP, TTP or ITP. Involved in sulfur amino acid metabolism. The protein is L-aspartate--L-methionine ligase of Staphylococcus aureus (strain NCTC 8325 / PS 47).